The sequence spans 506 residues: Pisatin demethylase (506 aa).

Cys453 is a heme binding site.

The protein belongs to the cytochrome P450 family. The cofactor is heme.

Can detoxify the phytoalexin pisatin from garden pea. Pisatin is an antimicrobial compound produced by pea in response to infection by plant pathogens. In Fusarium vanettenii (Neocosmospora pisi), this protein is Pisatin demethylase (PDA6-1).